The primary structure comprises 81 residues: Three-finger toxin 3FTx-Oxy6 (81 aa).

An N-terminal signal peptide occupies residues 1–21; it reads MKTLLLSLVVMTIVYLDLGYT. Cystine bridges form between Cys-24–Cys-43, Cys-36–Cys-61, Cys-65–Cys-73, and Cys-74–Cys-79.

Belongs to the three-finger toxin family. Short-chain subfamily. As to expression, expressed by the venom gland.

The protein localises to the secreted. This chain is Three-finger toxin 3FTx-Oxy6, found in Oxyuranus microlepidotus (Inland taipan).